Reading from the N-terminus, the 309-residue chain is Flavonol sulfotransferase-like (309 aa).

59 to 64 (KTGTTW) contributes to the 3'-phosphoadenylyl sulfate binding site. His119 (proton acceptor) is an active-site residue. 3'-phosphoadenylyl sulfate contacts are provided by residues Arg141, Ser149, Tyr207, and 274 to 276 (RKG).

The protein belongs to the sulfotransferase 1 family.

The protein resides in the cytoplasm. The polypeptide is Flavonol sulfotransferase-like (Flaveria bidentis (Coastal plain yellowtops)).